The sequence spans 227 residues: Enolase-phosphatase E1 (227 aa).

Residues D11 and E13 each contribute to the Mg(2+) site. Residues 118–119 (SS) and K161 contribute to the substrate site. D186 serves as a coordination point for Mg(2+).

It belongs to the HAD-like hydrolase superfamily. MasA/MtnC family. As to quaternary structure, monomer. Requires Mg(2+) as cofactor.

The protein resides in the cytoplasm. The protein localises to the nucleus. It carries out the reaction 5-methylsulfanyl-2,3-dioxopentyl phosphate + H2O = 1,2-dihydroxy-5-(methylsulfanyl)pent-1-en-3-one + phosphate. The protein operates within amino-acid biosynthesis; L-methionine biosynthesis via salvage pathway; L-methionine from S-methyl-5-thio-alpha-D-ribose 1-phosphate: step 3/6. Its pathway is amino-acid biosynthesis; L-methionine biosynthesis via salvage pathway; L-methionine from S-methyl-5-thio-alpha-D-ribose 1-phosphate: step 4/6. Functionally, bifunctional enzyme that catalyzes the enolization of 2,3-diketo-5-methylthiopentyl-1-phosphate (DK-MTP-1-P) into the intermediate 2-hydroxy-3-keto-5-methylthiopentenyl-1-phosphate (HK-MTPenyl-1-P), which is then dephosphorylated to form the acireductone 1,2-dihydroxy-3-keto-5-methylthiopentene (DHK-MTPene). The protein is Enolase-phosphatase E1 of Saccharomyces cerevisiae (strain RM11-1a) (Baker's yeast).